The chain runs to 130 residues: Larval cuticle protein 1 (130 aa).

The signal sequence occupies residues Met-1–Ala-16. A Chitin-binding type R&amp;R domain is found at Ala-43–Pro-104.

In terms of biological role, component of the larval cuticle. The polypeptide is Larval cuticle protein 1 (Lcp1) (Drosophila melanogaster (Fruit fly)).